The chain runs to 460 residues: tRNA modification GTPase MnmE (460 aa).

Residues Arg-22, Glu-87, and Arg-126 each contribute to the (6S)-5-formyl-5,6,7,8-tetrahydrofolate site. Residues 222–381 form the TrmE-type G domain; it reads GLKTAIIGKP…LENTIYNLVF (160 aa). Asn-232 is a K(+) binding site. GTP is bound by residues 232 to 237, 251 to 257, and 276 to 279; these read NVGKSS, TDIPGTT, and DTAG. Ser-236 is a binding site for Mg(2+). K(+)-binding residues include Thr-251, Ile-253, and Thr-256. Thr-257 is a Mg(2+) binding site. Lys-460 provides a ligand contact to (6S)-5-formyl-5,6,7,8-tetrahydrofolate.

The protein belongs to the TRAFAC class TrmE-Era-EngA-EngB-Septin-like GTPase superfamily. TrmE GTPase family. As to quaternary structure, homodimer. Heterotetramer of two MnmE and two MnmG subunits. The cofactor is K(+).

It is found in the cytoplasm. Exhibits a very high intrinsic GTPase hydrolysis rate. Involved in the addition of a carboxymethylaminomethyl (cmnm) group at the wobble position (U34) of certain tRNAs, forming tRNA-cmnm(5)s(2)U34. This Thermoanaerobacter sp. (strain X514) protein is tRNA modification GTPase MnmE.